The following is a 65-amino-acid chain: Large ribosomal subunit protein bL35 (65 aa).

This sequence belongs to the bacterial ribosomal protein bL35 family.

This is Large ribosomal subunit protein bL35 from Psychrobacter sp. (strain PRwf-1).